A 383-amino-acid chain; its full sequence is Chitinase-3-like protein 1 (383 aa).

The N-terminal stretch at M1–A21 is a signal peptide. A GH18 domain is found at Y22–V383. C26 and C51 form a disulfide bridge. N60 carries an N-linked (GlcNAc...) asparagine glycan. Chitin-binding positions include E70 to W71, G97 to N100, Y141, L204 to D207, and K263. C300 and C364 are oxidised to a cystine. Positions Q324 to A338 are important for AKT1 activation and IL8 production. Chitin is bound at residue W352.

Belongs to the glycosyl hydrolase 18 family. Monomer. In terms of tissue distribution, detected in mammary gland.

It is found in the secreted. The protein localises to the extracellular space. The protein resides in the cytoplasm. It localises to the perinuclear region. Its subcellular location is the endoplasmic reticulum. In terms of biological role, carbohydrate-binding lectin with a preference for chitin. Has no chitinase activity. May play a role in tissue remodeling and in the capacity of cells to respond to and cope with changes in their environment. Plays a role in T-helper cell type 2 (Th2) inflammatory response and IL-13-induced inflammation, regulating allergen sensitization, inflammatory cell apoptosis, dendritic cell accumulation and M2 macrophage differentiation. Facilitates invasion of pathogenic enteric bacteria into colonic mucosa and lymphoid organs. Mediates activation of AKT1 signaling pathway and subsequent IL8 production in colonic epithelial cells. Regulates antibacterial responses in lung by contributing to macrophage bacterial killing, controlling bacterial dissemination and augmenting host tolerance. Also regulates hyperoxia-induced injury, inflammation and epithelial apoptosis in lung. The polypeptide is Chitinase-3-like protein 1 (CHI3L1) (Bubalus bubalis (Domestic water buffalo)).